The following is a 239-amino-acid chain: Small ribosomal subunit protein uS2 (239 aa).

Belongs to the universal ribosomal protein uS2 family.

In Histophilus somni (strain 129Pt) (Haemophilus somnus), this protein is Small ribosomal subunit protein uS2.